Here is a 626-residue protein sequence, read N- to C-terminus: Transketolase-like protein 2 (626 aa).

A substrate-binding site is contributed by His-37. Residues Ser-40, His-77, and 123–125 contribute to the thiamine diphosphate site; that span reads GSL. Asp-155 is a Mg(2+) binding site. Thiamine diphosphate-binding residues include Gly-156 and Asn-185. The Mg(2+) site is built by Asn-185 and Leu-187. Residues Lys-247 and His-261 each contribute to the thiamine diphosphate site. His-261 and Ser-348 together coordinate substrate. Glu-369 and Phe-395 together coordinate thiamine diphosphate. Glu-369 acts as the Proton donor in catalysis. Positions 419 and 427 each coordinate substrate. Gln-431 is a binding site for thiamine diphosphate. Residue Arg-477 coordinates substrate.

Belongs to the transketolase family. In terms of assembly, homodimer. Mg(2+) serves as cofactor. The cofactor is Ca(2+). Requires Mn(2+) as cofactor. It depends on Co(2+) as a cofactor. Thiamine diphosphate is required as a cofactor.

The catalysed reaction is D-sedoheptulose 7-phosphate + D-glyceraldehyde 3-phosphate = aldehydo-D-ribose 5-phosphate + D-xylulose 5-phosphate. Its function is as follows. Plays an essential role in total transketolase activity and cell proliferation in cancer cells; after transfection with anti-TKTL1 siRNA, total transketolase activity dramatically decreases and proliferation was significantly inhibited in cancer cells. Plays a pivotal role in carcinogenesis. The sequence is that of Transketolase-like protein 2 (TKTL2) from Bos taurus (Bovine).